The primary structure comprises 525 residues: Putative EGF-like domain-containing protein R659 (525 aa).

Residues 1–24 (MGNKWCGIFLTILLLAQMSQTIFG) form the signal peptide. N-linked (GlcNAc...) asparagine; by host glycosylation is found at asparagine 60, asparagine 77, asparagine 171, asparagine 181, asparagine 268, and asparagine 281. The 43-residue stretch at 317–359 (LTQGCGNCDSNAECVFVSGSNSIVPKYQCKCKSGYVGNGTHCS) folds into the EGF-like domain. Cystine bridges form between cysteine 321-cysteine 330, cysteine 324-cysteine 345, and cysteine 347-cysteine 358. 2 N-linked (GlcNAc...) asparagine; by host glycosylation sites follow: asparagine 354 and asparagine 411.

The protein resides in the secreted. This chain is Putative EGF-like domain-containing protein R659, found in Acanthamoeba polyphaga (Amoeba).